The following is a 554-amino-acid chain: DnaJ homolog subfamily C member 1 (554 aa).

The N-terminal stretch at 1-47 (MTAPCSQPAQLPGRRQLGLVPFPPPPPRTPLLWLLLLLLAAVAPARG) is a signal peptide. At 48–153 (WESGDLELFD…RRVRKMSNAE (106 aa)) the chain is on the lumenal side. A J domain is found at 65 to 129 (NFYQFLGVQQ…ERRQRYDDIL (65 aa)). The helical transmembrane segment at 154 to 174 (LALLLFIILTVGHYAVVWSIY) threads the bilayer. At 175-554 (LEKQLDELLS…LVQKKKQAKS (380 aa)) the chain is on the cytoplasmic side. Residues 325-379 (KQAPEWTEEDLSQLTRSMVKFPGGTPGRWEKIAHELGRSVTDVTTKAKQLKDSVT) enclose the SANT 1 domain. A Phosphoserine modification is found at Ser-381. A compositionally biased stretch (polar residues) spans 392 to 405 (STVQNSRPIKTATT). A disordered region spans residues 392-500 (STVQNSRPIK…RSAEEPWTQN (109 aa)). A compositionally biased stretch (acidic residues) spans 421–432 (AAEEEQEGDSGE). A Phosphoserine modification is found at Ser-430. Residues 455 to 472 (AKPEPEEKSRAKRQKDFD) are compositionally biased toward basic and acidic residues. The segment covering 473–482 (IAEQNESSDE) has biased composition (acidic residues). Ser-479, Ser-480, Ser-484, and Ser-492 each carry phosphoserine. Over residues 483 to 494 (ESLRKERARSAE) the composition is skewed to basic and acidic residues. The region spanning 492-547 (SAEEPWTQNQQKLLELALQQYPRGSSDRWDKIARCVPSKSKEDCIARYKLLVELVQ) is the SANT 2 domain.

As to quaternary structure, interacts (via J domain) with HSPA5. Interacts (via cytosolic domain) with ribosomes. Interacts (via SANT 2 domain) with SERPINA3; the interaction delays the formation of the covalent inhibitory complex SERPINA3-chymotrypsin, but does not alter the catalytic activity of SERPINA3. Interacts (via SANT 2 domain) with ITIH4 (via C-terminus); the interaction protects ITIH4 against in vitro cleavage by kallikrein.

The protein localises to the endoplasmic reticulum membrane. The protein resides in the nucleus membrane. It is found in the microsome membrane. In terms of biological role, may modulate protein synthesis. In Homo sapiens (Human), this protein is DnaJ homolog subfamily C member 1 (DNAJC1).